A 944-amino-acid polypeptide reads, in one-letter code: DNA ligase 4 (944 aa).

ATP contacts are provided by Glu-280, Lys-282, Arg-287, Glu-340, Phe-382, Glu-442, Lys-447, Lys-464, and Lys-466. Lys-282 (N6-AMP-lysine intermediate) is an active-site residue. Glu-340 provides a ligand contact to Mg(2+). Mg(2+) is bound at residue Glu-442. 2 BRCT domains span residues 681–780 (PISN…PNYC) and 836–941 (FPLF…DFPV).

The protein belongs to the ATP-dependent DNA ligase family. Component of the DNA ligase IV complex, composed of DNL4, LIF1 and NEJ1. Interacts (via BRCT domain) with LIF1. Interacts with NEJ1. Interacts with POL4 in the DNL4-LIF1 complex. The cofactor is Mg(2+).

The protein localises to the nucleus. It carries out the reaction ATP + (deoxyribonucleotide)n-3'-hydroxyl + 5'-phospho-(deoxyribonucleotide)m = (deoxyribonucleotide)n+m + AMP + diphosphate.. In terms of biological role, DNA ligase involved in DNA non-homologous end joining (NHEJ); required for double-strand break (DSB) repair. The polypeptide is DNA ligase 4 (DNL4) (Saccharomyces cerevisiae (strain ATCC 204508 / S288c) (Baker's yeast)).